The chain runs to 260 residues: Small ribosomal subunit protein uS2 (260 aa).

It belongs to the universal ribosomal protein uS2 family.

In Gluconacetobacter diazotrophicus (strain ATCC 49037 / DSM 5601 / CCUG 37298 / CIP 103539 / LMG 7603 / PAl5), this protein is Small ribosomal subunit protein uS2.